Consider the following 211-residue polypeptide: Imidazole glycerol phosphate synthase subunit HisH (211 aa).

One can recognise a Glutamine amidotransferase type-1 domain in the interval 1–206; sequence MIGIIDYGRG…GKWVNEDATV (206 aa). Catalysis depends on C79, which acts as the Nucleophile. Active-site residues include H181 and E183.

As to quaternary structure, heterodimer of HisH and HisF.

It is found in the cytoplasm. The enzyme catalyses 5-[(5-phospho-1-deoxy-D-ribulos-1-ylimino)methylamino]-1-(5-phospho-beta-D-ribosyl)imidazole-4-carboxamide + L-glutamine = D-erythro-1-(imidazol-4-yl)glycerol 3-phosphate + 5-amino-1-(5-phospho-beta-D-ribosyl)imidazole-4-carboxamide + L-glutamate + H(+). It catalyses the reaction L-glutamine + H2O = L-glutamate + NH4(+). It participates in amino-acid biosynthesis; L-histidine biosynthesis; L-histidine from 5-phospho-alpha-D-ribose 1-diphosphate: step 5/9. Its function is as follows. IGPS catalyzes the conversion of PRFAR and glutamine to IGP, AICAR and glutamate. The HisH subunit catalyzes the hydrolysis of glutamine to glutamate and ammonia as part of the synthesis of IGP and AICAR. The resulting ammonia molecule is channeled to the active site of HisF. The sequence is that of Imidazole glycerol phosphate synthase subunit HisH from Desulfitobacterium hafniense (strain Y51).